The following is a 442-amino-acid chain: tRNA(Ile)-lysidine synthase (442 aa).

Residue 30-35 (SGGLDS) coordinates ATP.

Belongs to the tRNA(Ile)-lysidine synthase family.

It localises to the cytoplasm. The enzyme catalyses cytidine(34) in tRNA(Ile2) + L-lysine + ATP = lysidine(34) in tRNA(Ile2) + AMP + diphosphate + H(+). In terms of biological role, ligates lysine onto the cytidine present at position 34 of the AUA codon-specific tRNA(Ile) that contains the anticodon CAU, in an ATP-dependent manner. Cytidine is converted to lysidine, thus changing the amino acid specificity of the tRNA from methionine to isoleucine. This Pseudomonas fluorescens (strain Pf0-1) protein is tRNA(Ile)-lysidine synthase.